Reading from the N-terminus, the 151-residue chain is Ubiquitin-conjugating enzyme E2 2 (151 aa).

A disordered region spans residues 1-26 (MSTSARRRLMRDFKRMQTDPPAGVSA). The UBC core domain occupies 4–150 (SARRRLMRDF…VRETVEKSWE (147 aa)). C88 (glycyl thioester intermediate) is an active-site residue.

The protein belongs to the ubiquitin-conjugating enzyme family.

The protein resides in the cytoplasm. Its subcellular location is the nucleus. The enzyme catalyses S-ubiquitinyl-[E1 ubiquitin-activating enzyme]-L-cysteine + [E2 ubiquitin-conjugating enzyme]-L-cysteine = [E1 ubiquitin-activating enzyme]-L-cysteine + S-ubiquitinyl-[E2 ubiquitin-conjugating enzyme]-L-cysteine.. It functions in the pathway protein modification; protein ubiquitination. In terms of biological role, catalyzes the covalent attachment of ubiquitin to other proteins. Plays a role in transcription regulation by catalyzing the monoubiquitination of histone H2B to form H2BK123ub1. H2BK123ub1 gives a specific tag for epigenetic transcriptional activation and is also a prerequisite for H3K4me and H3K79me formation. Also involved in postreplication repair of UV-damaged DNA, in N-end rule-dependent protein degradation and in sporulation. The polypeptide is Ubiquitin-conjugating enzyme E2 2 (uvsJ) (Emericella nidulans (strain FGSC A4 / ATCC 38163 / CBS 112.46 / NRRL 194 / M139) (Aspergillus nidulans)).